We begin with the raw amino-acid sequence, 297 residues long: NAD(P)-dependent methylenetetrahydromethanopterin dehydrogenase (297 aa).

The protein to M.extorquens MtdA. As to quaternary structure, homohexamer.

The protein localises to the cytoplasm. It catalyses the reaction 5,10-methylenetetrahydromethanopterin + NAD(+) = 5,10-methenyl-5,6,7,8-tetrahydromethanopterin + NADH. The enzyme catalyses 5,10-methylenetetrahydromethanopterin + NADP(+) = 5,10-methenyl-5,6,7,8-tetrahydromethanopterin + NADPH. Its pathway is one-carbon metabolism; formaldehyde degradation; formate from formaldehyde (H(4)MPT route): step 2/5. Catalyzes the dehydrogenation of methylene-H(4)MPT. The chain is NAD(P)-dependent methylenetetrahydromethanopterin dehydrogenase (mtdB) from Methylorubrum extorquens (strain ATCC 14718 / DSM 1338 / JCM 2805 / NCIMB 9133 / AM1) (Methylobacterium extorquens).